We begin with the raw amino-acid sequence, 318 residues long: Protoheme IX farnesyltransferase (318 aa).

Helical transmembrane passes span 29–49, 51–71, 102–122, 123–143, 151–171, 179–199, 219–239, 241–261, and 280–300; these read IIPL…QGQV, PVLL…AQTI, LIFA…FANL, LAAS…THWL, IVIG…AVTG, LIFA…ALMI, ATVK…LLLV, PLHS…AVFI, and LFLY…IDSL.

Belongs to the UbiA prenyltransferase family. Protoheme IX farnesyltransferase subfamily.

It localises to the cell inner membrane. It carries out the reaction heme b + (2E,6E)-farnesyl diphosphate + H2O = Fe(II)-heme o + diphosphate. The protein operates within porphyrin-containing compound metabolism; heme O biosynthesis; heme O from protoheme: step 1/1. In terms of biological role, converts heme B (protoheme IX) to heme O by substitution of the vinyl group on carbon 2 of heme B porphyrin ring with a hydroxyethyl farnesyl side group. The sequence is that of Protoheme IX farnesyltransferase from Trichormus variabilis (strain ATCC 29413 / PCC 7937) (Anabaena variabilis).